We begin with the raw amino-acid sequence, 1327 residues long: Vascular endothelial growth factor receptor 1 (1327 aa).

The signal sequence occupies residues 1–24; that stretch reads MPRQLLSGTVLLGAAFLLAGSTSG. Residues 25-749 are Extracellular-facing; that stretch reads SKLKVPVLSV…GTVERSNLEL (725 aa). 7 consecutive Ig-like C2-type domains span residues 30–121, 120–222, 227–323, 331–417, 424–545, 552–644, and 651–737; these read PVLS…SIVY, VYVF…HRET, DIKL…TTVI, NLKR…LTVT, PQIY…RNVS, PSGF…KDVS, and PALL…AYVT. 5 N-linked (GlcNAc...) asparagine glycosylation sites follow: Asn48, Asn73, Asn82, Asn98, and Asn125. A disulfide bridge connects residues Cys51 and Cys105. A disulfide bridge links Cys154 with Cys203. Asn247 is a glycosylation site (N-linked (GlcNAc...) asparagine). A disulfide bridge links Cys248 with Cys307. N-linked (GlcNAc...) asparagine glycans are attached at residues Asn319, Asn383, Asn398, Asn409, Asn413, Asn470, Asn512, Asn543, Asn593, Asn615, and Asn663. Cys450 and Cys531 are oxidised to a cystine. Cys573 and Cys626 form a disulfide bridge. Cys672 and Cys721 are disulfide-bonded. The helical transmembrane segment at 750–770 threads the bilayer; the sequence is ITLTCTCVAATLFWLLLTLFI. Residues 771–1327 lie on the Cytoplasmic side of the membrane; the sequence is RKLKRPYFSE…SVVHYSQPSI (557 aa). In terms of domain architecture, Protein kinase spans 819–1151; sequence LKLGKSLGHG…ELVKRLGDLL (333 aa). ATP is bound by residues 825–833 and Lys853; that span reads LGHGAFGKV. Residues 950–971 are disordered; it reads ASVTSSESFASSGFQEDKSLSD. Positions 951–961 are enriched in low complexity; sequence SVTSSESFASS. Asp1015 functions as the Proton acceptor in the catalytic mechanism. 6 positions are modified to phosphotyrosine; by autocatalysis: Tyr1046, Tyr1162, Tyr1202, Tyr1231, Tyr1316, and Tyr1322.

It belongs to the protein kinase superfamily. Tyr protein kinase family. CSF-1/PDGF receptor subfamily. In terms of assembly, interacts with VEGFA, VEGFB and PGF. Monomer in the absence of bound VEGFA, VEGFB or PGF. Homodimer in the presence of bound VEGFA, VEGFB and PGF. Autophosphorylated on tyrosine residues upon ligand binding.

The protein resides in the cell membrane. It is found in the endosome. It localises to the secreted. It catalyses the reaction L-tyrosyl-[protein] + ATP = O-phospho-L-tyrosyl-[protein] + ADP + H(+). With respect to regulation, present in an inactive conformation in the absence of bound ligand. Binding of VEGFA, VEGFB or PGF leads to dimerization and activation by autophosphorylation on tyrosine residues. In terms of biological role, tyrosine-protein kinase that acts as a cell-surface receptor for VEGFA, VEGFB and PGF, and plays an essential role in the regulation of angiogenesis, cell survival, cell migration, macrophage function, and chemotaxis. Acts as a positive regulator of postnatal retinal hyaloid vessel regression. Has very high affinity for VEGFA and relatively low protein kinase activity; may function as a negative regulator of VEGFA signaling by limiting the amount of free VEGFA and preventing its binding to KDR. Ligand binding leads to the activation of several signaling cascades. Activation of PLCG1 leads to the production of the cellular signaling molecules diacylglycerol and inositol 1,4,5-trisphosphate and the activation of protein kinase C. Mediates phosphorylation of PIK3R1, the regulatory subunit of phosphatidylinositol 3-kinase, leading to activation of phosphatidylinositol kinase and the downstream signaling pathway. Mediates activation of MAPK1/ERK2, MAPK3/ERK1 and the MAP kinase signaling pathway, as well as of the AKT1 signaling pathway. Phosphorylates PLCG1. Promotes phosphorylation of AKT1 and CBL. This chain is Vascular endothelial growth factor receptor 1 (FLT1), found in Gallus gallus (Chicken).